The following is a 172-amino-acid chain: Adenine phosphoribosyltransferase (172 aa).

Belongs to the purine/pyrimidine phosphoribosyltransferase family. As to quaternary structure, homodimer.

The protein localises to the cytoplasm. The enzyme catalyses AMP + diphosphate = 5-phospho-alpha-D-ribose 1-diphosphate + adenine. Its pathway is purine metabolism; AMP biosynthesis via salvage pathway; AMP from adenine: step 1/1. Its function is as follows. Catalyzes a salvage reaction resulting in the formation of AMP, that is energically less costly than de novo synthesis. This is Adenine phosphoribosyltransferase from Streptococcus pyogenes serotype M12 (strain MGAS9429).